A 281-amino-acid chain; its full sequence is Nicotinamide/nicotinic acid mononucleotide adenylyltransferase 1 (281 aa).

The beta-nicotinamide D-ribonucleotide site is built by G15 and S16. G15, S16, F17, and M23 together coordinate NAD(+). 15-17 is a binding site for ATP; the sequence is GSF. An ATP-binding site is contributed by H24. Beta-nicotinamide D-ribonucleotide is bound by residues Y55 and K57. K57 serves as a coordination point for NAD(+). Residue K58 participates in ATP binding. Beta-nicotinamide D-ribonucleotide contacts are provided by W92 and T95. W92 and T95 together coordinate NAD(+). The disordered stretch occupies residues 113–143; that stretch reads PQQNSPVLEKPGRKRKWAEQKQDISEKKSLE. S117 is modified (phosphoserine). The Nuclear localization signal signature appears at 123-129; the sequence is PGRKRKW. Residues 129 to 143 show a composition bias toward basic and acidic residues; it reads WAEQKQDISEKKSLE. NAD(+) contacts are provided by G158, D160, L170, W171, E217, and N221. Residue 158 to 160 participates in ATP binding; the sequence is GAD. Residues L170 and W171 each coordinate beta-nicotinamide D-ribonucleotide. 226-229 is an ATP binding site; the sequence is TKIR.

The protein belongs to the eukaryotic NMN adenylyltransferase family. Homohexamer. Interacts with ADPRT/PARP1. The cofactor is Zn(2+). Mg(2+) is required as a cofactor.

Its subcellular location is the nucleus. The enzyme catalyses beta-nicotinamide D-ribonucleotide + ATP + H(+) = diphosphate + NAD(+). It catalyses the reaction nicotinate beta-D-ribonucleotide + ATP + H(+) = deamido-NAD(+) + diphosphate. It functions in the pathway cofactor biosynthesis; NAD(+) biosynthesis; NAD(+) from nicotinamide D-ribonucleotide: step 1/1. The protein operates within cofactor biosynthesis; NAD(+) biosynthesis; deamido-NAD(+) from nicotinate D-ribonucleotide: step 1/1. Its activity is regulated as follows. Activity is strongly inhibited by galotannin. Inhibited by P1-(adenosine-5')-P4-(nicotinic-acid-riboside-5')-tetraphosphate (Nap4AD). Catalyzes the formation of NAD(+) from nicotinamide mononucleotide (NMN) and ATP. Can also use the deamidated form; nicotinic acid mononucleotide (NaMN) as substrate with the same efficiency. Can use triazofurin monophosphate (TrMP) as substrate. Also catalyzes the reverse reaction, i.e. the pyrophosphorolytic cleavage of NAD(+). For the pyrophosphorolytic activity, prefers NAD(+) and NaAD as substrates and degrades NADH, nicotinic acid adenine dinucleotide phosphate (NHD) and nicotinamide guanine dinucleotide (NGD) less effectively. Involved in the synthesis of ATP in the nucleus, together with PARP1, PARG and NUDT5. Nuclear ATP generation is required for extensive chromatin remodeling events that are energy-consuming. Fails to cleave phosphorylated dinucleotides NADP(+), NADPH and NaADP(+). Also acts as a cofactor for glutamate and aspartate ADP-ribosylation by directing PARP1 catalytic activity to glutamate and aspartate residues on histones. Protects against axonal degeneration following mechanical or toxic insults. Delays axonal degeneration after axotomy. Results in a &gt;10-fold increase in intact neurites 72 hours after injury. Neural protection does not correlate with cellular NAD(+) levels but may still require enzyme activity. This is Nicotinamide/nicotinic acid mononucleotide adenylyltransferase 1 (NMNAT1) from Bos taurus (Bovine).